The sequence spans 428 residues: Adenylosuccinate synthetase (428 aa).

GTP is bound by residues 11–17 (GDEGKGK) and 39–41 (GHT). The active-site Proton acceptor is D12. Mg(2+) contacts are provided by D12 and G39. IMP contacts are provided by residues 12–15 (DEGK), 37–40 (NAGH), T130, R144, N226, T241, and R305. H40 (proton donor) is an active-site residue. A substrate-binding site is contributed by 301–307 (VTTGRKR). GTP is bound by residues R307, 333-335 (KLD), and 415-417 (GTG).

This sequence belongs to the adenylosuccinate synthetase family. Homodimer. It depends on Mg(2+) as a cofactor.

The protein localises to the cytoplasm. It catalyses the reaction IMP + L-aspartate + GTP = N(6)-(1,2-dicarboxyethyl)-AMP + GDP + phosphate + 2 H(+). The protein operates within purine metabolism; AMP biosynthesis via de novo pathway; AMP from IMP: step 1/2. Functionally, plays an important role in the de novo pathway and in the salvage pathway of purine nucleotide biosynthesis. Catalyzes the first committed step in the biosynthesis of AMP from IMP. The polypeptide is Adenylosuccinate synthetase (Candida albicans (strain SC5314 / ATCC MYA-2876) (Yeast)).